Here is a 360-residue protein sequence, read N- to C-terminus: Ribosomal RNA large subunit methyltransferase M (360 aa).

Residues Ser190, 223–226 (CPGG), Asp242, Asp262, and Asp280 each bind S-adenosyl-L-methionine. Lys309 functions as the Proton acceptor in the catalytic mechanism.

Belongs to the class I-like SAM-binding methyltransferase superfamily. RNA methyltransferase RlmE family. RlmM subfamily. In terms of assembly, monomer.

The protein resides in the cytoplasm. The enzyme catalyses cytidine(2498) in 23S rRNA + S-adenosyl-L-methionine = 2'-O-methylcytidine(2498) in 23S rRNA + S-adenosyl-L-homocysteine + H(+). In terms of biological role, catalyzes the 2'-O-methylation at nucleotide C2498 in 23S rRNA. This Haemophilus ducreyi (strain 35000HP / ATCC 700724) protein is Ribosomal RNA large subunit methyltransferase M.